A 240-amino-acid polypeptide reads, in one-letter code: MNTLFIADLHLSAQEPAITAGFLRFLRQDAIHADALYILGDLFEAWIGDDDPEPLHGEIAAALKALQQAGVPCYFIHGNRDFLVGKRFARTSGMQLLPEEQVLDLYGRKILILHGDTLCTDDQAYQQFRRKVHNPLIQKLFLAMPLRWRLKIAAKMRARSQQSNQYKSDSIMDVNPQAVEQAMLRHKVHWMIHGHTHRPAVHELALSNGKAHRVVLGAWHVEGSMIKVSADAVELIQFPF.

Asp-8, His-10, Asp-41, Asn-79, and His-114 together coordinate Mn(2+). 79-80 (NR) contributes to the substrate binding site. 5 residues coordinate substrate: Asp-122, Ser-160, Asn-164, Lys-167, and His-195. His-195 and His-197 together coordinate Mn(2+).

This sequence belongs to the LpxH family. The cofactor is Mn(2+).

The protein localises to the cell inner membrane. It carries out the reaction UDP-2-N,3-O-bis[(3R)-3-hydroxytetradecanoyl]-alpha-D-glucosamine + H2O = 2-N,3-O-bis[(3R)-3-hydroxytetradecanoyl]-alpha-D-glucosaminyl 1-phosphate + UMP + 2 H(+). Its pathway is glycolipid biosynthesis; lipid IV(A) biosynthesis; lipid IV(A) from (3R)-3-hydroxytetradecanoyl-[acyl-carrier-protein] and UDP-N-acetyl-alpha-D-glucosamine: step 4/6. Functionally, hydrolyzes the pyrophosphate bond of UDP-2,3-diacylglucosamine to yield 2,3-diacylglucosamine 1-phosphate (lipid X) and UMP by catalyzing the attack of water at the alpha-P atom. Involved in the biosynthesis of lipid A, a phosphorylated glycolipid that anchors the lipopolysaccharide to the outer membrane of the cell. The sequence is that of UDP-2,3-diacylglucosamine hydrolase from Serratia proteamaculans (strain 568).